The sequence spans 72 residues: ATP synthase protein 8 (72 aa).

The helical transmembrane segment at 16-36 (WTLIALFLLFSFLVVSVLPAV) threads the bilayer.

The protein belongs to the ATPase protein 8 family. F-type ATPases have 2 components, CF(1) - the catalytic core - and CF(0) - the membrane proton channel.

Its subcellular location is the mitochondrion membrane. Its function is as follows. Mitochondrial membrane ATP synthase (F(1)F(0) ATP synthase or Complex V) produces ATP from ADP in the presence of a proton gradient across the membrane which is generated by electron transport complexes of the respiratory chain. F-type ATPases consist of two structural domains, F(1) - containing the extramembraneous catalytic core and F(0) - containing the membrane proton channel, linked together by a central stalk and a peripheral stalk. During catalysis, ATP synthesis in the catalytic domain of F(1) is coupled via a rotary mechanism of the central stalk subunits to proton translocation. Part of the complex F(0) domain. Minor subunit located with subunit a in the membrane. This Metridium senile (Brown sea anemone) protein is ATP synthase protein 8 (MTATP8).